The following is a 149-amino-acid chain: UPF0756 membrane protein BBR47_12340 (149 aa).

The next 4 membrane-spanning stretches (helical) occupy residues 6–26 (IILL…LVYA), 48–68 (PMFH…IAKG), 86–106 (IAIL…SILP), and 120–140 (LLAV…AGCI).

The protein belongs to the UPF0756 family.

The protein resides in the cell membrane. The polypeptide is UPF0756 membrane protein BBR47_12340 (Brevibacillus brevis (strain 47 / JCM 6285 / NBRC 100599)).